A 417-amino-acid chain; its full sequence is Spermidine/putrescine import ATP-binding protein PotA (417 aa).

The 304-residue stretch at 5-308 (IILKDLTKVF…PANRFVAQFV (304 aa)) folds into the ABC transporter domain. Residue 37–44 (GPSGCGKT) coordinates ATP. Positions 105–177 (DFNSKIKDNL…TALKCKKINK (73 aa)) are insert.

The protein belongs to the ABC transporter superfamily. Spermidine/putrescine importer (TC 3.A.1.11.1) family. The complex is composed of two ATP-binding proteins (PotA), two transmembrane proteins (PotB and PotC) and a solute-binding protein (PotD).

The protein localises to the cell membrane. The catalysed reaction is ATP + H2O + polyamine-[polyamine-binding protein]Side 1 = ADP + phosphate + polyamineSide 2 + [polyamine-binding protein]Side 1.. Functionally, part of the ABC transporter complex PotABCD involved in spermidine/putrescine import. Responsible for energy coupling to the transport system. The chain is Spermidine/putrescine import ATP-binding protein PotA from Aster yellows witches'-broom phytoplasma (strain AYWB).